Consider the following 183-residue polypeptide: Adenine phosphoribosyltransferase (183 aa).

Belongs to the purine/pyrimidine phosphoribosyltransferase family. In terms of assembly, homodimer.

It is found in the cytoplasm. The catalysed reaction is AMP + diphosphate = 5-phospho-alpha-D-ribose 1-diphosphate + adenine. The protein operates within purine metabolism; AMP biosynthesis via salvage pathway; AMP from adenine: step 1/1. In terms of biological role, catalyzes a salvage reaction resulting in the formation of AMP, that is energically less costly than de novo synthesis. In Proteus mirabilis (strain HI4320), this protein is Adenine phosphoribosyltransferase.